The primary structure comprises 171 residues: Non-specific lipid transfer protein GPI-anchored 19 (171 aa).

A signal peptide spans 1–18; sequence MILAILALVIATFLYGGA. Disulfide bonds link Cys-25–Cys-66, Cys-35–Cys-50, Cys-51–Cys-93, and Cys-64–Cys-103. 2 N-linked (GlcNAc...) asparagine glycosylation sites follow: Asn-72 and Asn-82. Positions 113–149 are disordered; that stretch reads LPANTPVGSPRSAPSPSGTTSPANTPSGSKKFPLSNE. A compositionally biased stretch (low complexity) spans 118–141; that stretch reads PVGSPRSAPSPSGTTSPANTPSGS. Residue Ser-147 is the site of GPI-anchor amidated serine attachment. Asn-148 carries an N-linked (GlcNAc...) asparagine glycan. The propeptide at 148 to 171 is removed in mature form; the sequence is NESSSKSNVIILSFVSIALVLAII.

It belongs to the plant LTP family.

It is found in the cell membrane. In terms of biological role, probable lipid transfer protein. This chain is Non-specific lipid transfer protein GPI-anchored 19, found in Arabidopsis thaliana (Mouse-ear cress).